Consider the following 202-residue polypeptide: Thymidylate kinase (202 aa).

7 to 14 lines the ATP pocket; the sequence is GTEGVGKT.

It belongs to the thymidylate kinase family.

The enzyme catalyses dTMP + ATP = dTDP + ADP. In terms of biological role, phosphorylation of dTMP to form dTDP in both de novo and salvage pathways of dTTP synthesis. The protein is Thymidylate kinase of Acinetobacter baylyi (strain ATCC 33305 / BD413 / ADP1).